Reading from the N-terminus, the 123-residue chain is MAWTPLLLLLLSHCTGSLSQPVLTQPPSSSASPGESARLTCTLPSDINVGSYNIYWYQQKPGSPPRYLLYYYSDSDKGQGSGVPSRFSGSKDASANTGILLISGLQSEDEADYYCMIWPSNAS.

The signal sequence occupies residues 1-19 (MAWTPLLLLLLSHCTGSLS). Residues 20–44 (QPVLTQPPSSSASPGESARLTCTLP) are framework-1. In terms of domain architecture, Ig-like spans 21 to 123 (PVLTQPPSSS…YCMIWPSNAS (103 aa)). An intrachain disulfide couples Cys41 to Cys115. A complementarity-determining-1 region spans residues 45-53 (SDINVGSYN). Positions 54 to 70 (IYWYQQKPGSPPRYLLY) are framework-2. The interval 71–77 (YYSDSDK) is complementarity-determining-2. The framework-3 stretch occupies residues 78-115 (GQGSGVPSRFSGSKDASANTGILLISGLQSEDEADYYC). The interval 116–123 (MIWPSNAS) is complementarity-determining-3.

As to quaternary structure, immunoglobulins are composed of two identical heavy chains and two identical light chains; disulfide-linked.

Its subcellular location is the secreted. It is found in the cell membrane. In terms of biological role, v region of the variable domain of immunoglobulin light chains that participates in the antigen recognition. Immunoglobulins, also known as antibodies, are membrane-bound or secreted glycoproteins produced by B lymphocytes. In the recognition phase of humoral immunity, the membrane-bound immunoglobulins serve as receptors which, upon binding of a specific antigen, trigger the clonal expansion and differentiation of B lymphocytes into immunoglobulins-secreting plasma cells. Secreted immunoglobulins mediate the effector phase of humoral immunity, which results in the elimination of bound antigens. The antigen binding site is formed by the variable domain of one heavy chain, together with that of its associated light chain. Thus, each immunoglobulin has two antigen binding sites with remarkable affinity for a particular antigen. The variable domains are assembled by a process called V-(D)-J rearrangement and can then be subjected to somatic hypermutations which, after exposure to antigen and selection, allow affinity maturation for a particular antigen. This Homo sapiens (Human) protein is Immunoglobulin lambda variable 5-37.